We begin with the raw amino-acid sequence, 207 residues long: Large ribosomal subunit protein uL4 (207 aa).

Residues histidine 49–arginine 79 form a disordered region.

The protein belongs to the universal ribosomal protein uL4 family. Part of the 50S ribosomal subunit.

Its function is as follows. One of the primary rRNA binding proteins, this protein initially binds near the 5'-end of the 23S rRNA. It is important during the early stages of 50S assembly. It makes multiple contacts with different domains of the 23S rRNA in the assembled 50S subunit and ribosome. Functionally, forms part of the polypeptide exit tunnel. In Heliobacterium modesticaldum (strain ATCC 51547 / Ice1), this protein is Large ribosomal subunit protein uL4.